The primary structure comprises 20 residues: Cytochrome P450-RR1 (20 aa).

This sequence belongs to the cytochrome P450 family. It depends on heme as a cofactor.

Its function is as follows. P450-RRI catalyzes the O-dealkylation of 2-ethoxyphenol and 2-methoxyphenol to produce catechol. The cytochrome binds other ortho-substituted phenols, including 2-ethoxyphenol, 2-methylphenol and 2-chlorophenol. The protein is Cytochrome P450-RR1 of Rhodococcus rhodochrous.